Consider the following 1284-residue polypeptide: ABC multidrug transporter atrC (1284 aa).

The span at 1–11 shows a compositional bias: basic and acidic residues; it reads MKSTAESKETP. Positions 1–24 are disordered; it reads MKSTAESKETPSQDESTTSVPCTE. 6 helical membrane-spanning segments follow: residues 55 to 75, 99 to 119, 178 to 198, 203 to 223, 282 to 302, and 320 to 340; these read AVAILAACASGAGIALQNLIF, AAELALYFVYLGIARLVLSYT, IGLLFQGLAAFVTLSLSRLWC, TLICICIPVATIGTTGVVAAV, LLGLLFSAEYTIIYLGYGLAF, and IFTVLLSVVIASINLTLLAPY. Residues 55 to 346 form the ABC transmembrane type-1 1 domain; the sequence is AVAILAACAS…LAPYSIEFSR (292 aa). An ABC transporter 1 domain is found at 381–626; it reads VELENVTFSY…DGVYAGLVKI (246 aa). Asn-385 and Asn-401 each carry an N-linked (GlcNAc...) asparagine glycan. 416 to 423 serves as a coordination point for ATP; sequence GQSGSGKS. N-linked (GlcNAc...) asparagine glycans are attached at residues Asn-488 and Asn-632. 2 consecutive transmembrane segments (helical) span residues 705-725 and 745-765; these read LVVLLGCLGGCAMYPGQAILM and FYASMLIVLAAGCLICYLAVG. In terms of domain architecture, ABC transmembrane type-1 2 spans 705-992; the sequence is LVVLLGCLGG…LFQWSTSITK (288 aa). Asn-800 carries N-linked (GlcNAc...) asparagine glycosylation. A run of 4 helical transmembrane segments spans residues 824 to 844, 846 to 866, 931 to 951, and 955 to 975; these read IALVVIAVLQVVTCGILAIAF, WKLGLVVVFGGIPPLVGAGMV, MICFGLTQCIEYWFQALGFWY, and LVSLGETSMYSFFVAFLSVFF. A glycan (N-linked (GlcNAc...) asparagine) is linked at Asn-995. In terms of domain architecture, ABC transporter 2 spans 1027 to 1280; that stretch reads IAMDNVRFSY…GGLYRRMCEA (254 aa). An ATP-binding site is contributed by 1062–1069; it reads GSSGCGKS. Asn-1122 is a glycosylation site (N-linked (GlcNAc...) asparagine).

It belongs to the ABC transporter superfamily. ABCB family. Multidrug resistance exporter (TC 3.A.1.201) subfamily.

It is found in the cell membrane. Pleiotropic ABC efflux transporter involved in the protection of the cells against a wide range of toxic compounds. The protein is ABC multidrug transporter atrC of Emericella nidulans (Aspergillus nidulans).